The chain runs to 212 residues: Thiamine-phosphate synthase (212 aa).

4-amino-2-methyl-5-(diphosphooxymethyl)pyrimidine-binding positions include 43–47 (QYRNK) and Asn-75. Mg(2+) contacts are provided by Asp-76 and Asp-95. Residue Ser-114 coordinates 4-amino-2-methyl-5-(diphosphooxymethyl)pyrimidine. 141–143 (SMT) is a 2-[(2R,5Z)-2-carboxy-4-methylthiazol-5(2H)-ylidene]ethyl phosphate binding site. 4-amino-2-methyl-5-(diphosphooxymethyl)pyrimidine is bound at residue Lys-144. Position 171 (Gly-171) interacts with 2-[(2R,5Z)-2-carboxy-4-methylthiazol-5(2H)-ylidene]ethyl phosphate.

It belongs to the thiamine-phosphate synthase family. Requires Mg(2+) as cofactor.

It carries out the reaction 2-[(2R,5Z)-2-carboxy-4-methylthiazol-5(2H)-ylidene]ethyl phosphate + 4-amino-2-methyl-5-(diphosphooxymethyl)pyrimidine + 2 H(+) = thiamine phosphate + CO2 + diphosphate. It catalyses the reaction 2-(2-carboxy-4-methylthiazol-5-yl)ethyl phosphate + 4-amino-2-methyl-5-(diphosphooxymethyl)pyrimidine + 2 H(+) = thiamine phosphate + CO2 + diphosphate. The enzyme catalyses 4-methyl-5-(2-phosphooxyethyl)-thiazole + 4-amino-2-methyl-5-(diphosphooxymethyl)pyrimidine + H(+) = thiamine phosphate + diphosphate. It functions in the pathway cofactor biosynthesis; thiamine diphosphate biosynthesis; thiamine phosphate from 4-amino-2-methyl-5-diphosphomethylpyrimidine and 4-methyl-5-(2-phosphoethyl)-thiazole: step 1/1. Its function is as follows. Condenses 4-methyl-5-(beta-hydroxyethyl)thiazole monophosphate (THZ-P) and 2-methyl-4-amino-5-hydroxymethyl pyrimidine pyrophosphate (HMP-PP) to form thiamine monophosphate (TMP). The polypeptide is Thiamine-phosphate synthase (Nitrosomonas eutropha (strain DSM 101675 / C91 / Nm57)).